A 190-amino-acid polypeptide reads, in one-letter code: Threonylcarbamoyl-AMP synthase (190 aa).

Residues 7–190 enclose the YrdC-like domain; the sequence is GDAIAAAIDV…ALTGELFRQG (184 aa).

The protein belongs to the SUA5 family. TsaC subfamily.

The protein localises to the cytoplasm. The enzyme catalyses L-threonine + hydrogencarbonate + ATP = L-threonylcarbamoyladenylate + diphosphate + H2O. In terms of biological role, required for the formation of a threonylcarbamoyl group on adenosine at position 37 (t(6)A37) in tRNAs that read codons beginning with adenine. Catalyzes the conversion of L-threonine, HCO(3)(-)/CO(2) and ATP to give threonylcarbamoyl-AMP (TC-AMP) as the acyladenylate intermediate, with the release of diphosphate. The polypeptide is Threonylcarbamoyl-AMP synthase (Shigella dysenteriae serotype 1 (strain Sd197)).